The sequence spans 363 residues: 3-methyl-D-ornithine--L-lysine ligase (363 aa).

ATP is bound at residue Lys-10. L-lysine is bound at residue 11–12 (LQ). ATP-binding positions include Asp-31, 49 to 50 (DV), and 72 to 73 (EN). Glu-72 serves as a coordination point for L-lysine. An ATP-grasp domain is found at 85 to 269 (EEFSCPVLFD…LIELLFRAFG (185 aa)). ADP is bound by residues Lys-104, Lys-131, Ser-138, and 160–163 (EEYV). Residues 169–171 (SLE) and Asp-225 each bind D-ornithine. The Mg(2+) site is built by Glu-227, Glu-239, and Asp-241. Residue Glu-239 participates in ADP binding. Residues 243-248 (RFPSQT) and Glu-302 contribute to the D-ornithine site. 2 residues coordinate L-lysine: Ser-246 and Glu-302.

Belongs to the PylC family. It depends on Mg(2+) as a cofactor.

It carries out the reaction (3R)-3-methyl-D-ornithine + L-lysine + ATP = (3R)-3-methyl-D-ornithyl-N(6)-L-lysine + ADP + phosphate + H(+). The protein operates within amino-acid biosynthesis; L-pyrrolysine biosynthesis. In terms of biological role, is required for the biosynthesis of pyrrolysine. Catalyzes the ATP-dependent ligation between (3R)-3-methyl-D-ornithine and L-lysine, leading to (3R)-3-methyl-D-ornithyl-N6-L-lysine. The polypeptide is 3-methyl-D-ornithine--L-lysine ligase (Methanosarcina acetivorans (strain ATCC 35395 / DSM 2834 / JCM 12185 / C2A)).